A 662-amino-acid chain; its full sequence is uncharacterized protein (662 aa).

16 helical membrane passes run 10–30, 46–66, 68–88, 101–121, 167–187, 193–213, 217–237, 263–283, 285–305, 312–332, 342–362, 373–393, 394–414, 432–452, 460–480, and 485–505; these read SSIVSSALVSSAIGYAIGWPV, PVIGLGIFGAVAVSIFHFLPI, AINLMLIVLGLSAVAFWLSKG, GFCWFTVAFLLCLLPAFEIIP, LIYYYVWHFIAACSSVITGAT, IALTGMTALFSTFVVTWLAVA, SAYAAWWSLPLLFVGSLKPAV, PWVPQHVFSGTLALIAIMAYL, ILYSNAGRNMALAVFMGAILA, MWAGSLSLLLILPLVGALSVS, EVLISLSVTVVITLLCAAVLI, KVVEFWVFPIFAGDYWFLDIP, GFWLVLVFLEFGIIYLSFLIW, ALTVSVLAPLFCTQILHSVIM, VLIPSMLVMTALTSGLFSTTI, and LVGRLTTITAIILLAPSILVG.

It is found in the cell membrane. This is an uncharacterized protein from Sinorhizobium fredii (strain NBRC 101917 / NGR234).